The primary structure comprises 226 residues: Probable C4-dicarboxylate response regulator DctR (226 aa).

One can recognise a Response regulatory domain in the interval 7 to 123 (KVLLIEDDPM…RMRQALEKYK (117 aa)). Residue Asp-58 is modified to 4-aspartylphosphate. Positions 179–198 (AEEVAKALGIARVTARRYLD) form a DNA-binding region, H-T-H motif.

In terms of processing, phosphorylated by DctS.

The protein resides in the cytoplasm. Functionally, member of the two-component regulatory system DctS/DctR. Essential for expression of dctP. The chain is Probable C4-dicarboxylate response regulator DctR (dctR) from Bacillus subtilis (strain 168).